Here is a 214-residue protein sequence, read N- to C-terminus: Adenylate kinase (214 aa).

ATP is bound at residue 10–15 (GAGKGT). The NMP stretch occupies residues 30–59 (STGDMLRAAVKSGSELGKQAKDIMDAGKLV). AMP-binding positions include Thr-31, Arg-36, 57-59 (KLV), 85-88 (GFPR), and Gln-92. The interval 122-159 (GRRVHAPSGRVYHVKFNPPKVEGKDDVTGEELTTRKDD) is LID. ATP contacts are provided by residues Arg-123 and 132 to 133 (VY). Arg-156 and Arg-167 together coordinate AMP. Lys-192 bears the N6-acetyllysine mark. Residue Lys-200 participates in ATP binding.

It belongs to the adenylate kinase family. In terms of assembly, monomer.

The protein localises to the cytoplasm. The enzyme catalyses AMP + ATP = 2 ADP. It participates in purine metabolism; AMP biosynthesis via salvage pathway; AMP from ADP: step 1/1. Its function is as follows. Catalyzes the reversible transfer of the terminal phosphate group between ATP and AMP. Plays an important role in cellular energy homeostasis and in adenine nucleotide metabolism. In Escherichia coli O45:K1 (strain S88 / ExPEC), this protein is Adenylate kinase.